The sequence spans 158 residues: Transcription elongation factor GreA (158 aa).

Residues 47–75 (ENSEYDAAKDEQAFVEQRITQVEKMIRNA) are a coiled coil.

Belongs to the GreA/GreB family.

In terms of biological role, necessary for efficient RNA polymerase transcription elongation past template-encoded arresting sites. The arresting sites in DNA have the property of trapping a certain fraction of elongating RNA polymerases that pass through, resulting in locked ternary complexes. Cleavage of the nascent transcript by cleavage factors such as GreA or GreB allows the resumption of elongation from the new 3'terminus. GreA releases sequences of 2 to 3 nucleotides. The chain is Transcription elongation factor GreA from Oceanobacillus iheyensis (strain DSM 14371 / CIP 107618 / JCM 11309 / KCTC 3954 / HTE831).